A 158-amino-acid polypeptide reads, in one-letter code: 2-C-methyl-D-erythritol 2,4-cyclodiphosphate synthase (158 aa).

Residues Asp9 and His11 each coordinate a divalent metal cation. 4-CDP-2-C-methyl-D-erythritol 2-phosphate-binding positions include 9-11 (DVH) and 35-36 (HS). An a divalent metal cation-binding site is contributed by His43. Residues 57–59 (DIG), 62–66 (FPDTD), 133–136 (TTTE), Phe140, and Arg143 each bind 4-CDP-2-C-methyl-D-erythritol 2-phosphate.

The protein belongs to the IspF family. In terms of assembly, homotrimer. The cofactor is a divalent metal cation.

It carries out the reaction 4-CDP-2-C-methyl-D-erythritol 2-phosphate = 2-C-methyl-D-erythritol 2,4-cyclic diphosphate + CMP. It functions in the pathway isoprenoid biosynthesis; isopentenyl diphosphate biosynthesis via DXP pathway; isopentenyl diphosphate from 1-deoxy-D-xylulose 5-phosphate: step 4/6. Involved in the biosynthesis of isopentenyl diphosphate (IPP) and dimethylallyl diphosphate (DMAPP), two major building blocks of isoprenoid compounds. Catalyzes the conversion of 4-diphosphocytidyl-2-C-methyl-D-erythritol 2-phosphate (CDP-ME2P) to 2-C-methyl-D-erythritol 2,4-cyclodiphosphate (ME-CPP) with a corresponding release of cytidine 5-monophosphate (CMP). This Actinobacillus pleuropneumoniae serotype 5b (strain L20) protein is 2-C-methyl-D-erythritol 2,4-cyclodiphosphate synthase.